The following is a 122-amino-acid chain: Large ribosomal subunit protein uL14 (122 aa).

Belongs to the universal ribosomal protein uL14 family. As to quaternary structure, part of the 50S ribosomal subunit. Forms a cluster with proteins L3 and L19. In the 70S ribosome, L14 and L19 interact and together make contacts with the 16S rRNA in bridges B5 and B8.

In terms of biological role, binds to 23S rRNA. Forms part of two intersubunit bridges in the 70S ribosome. The protein is Large ribosomal subunit protein uL14 of Citrifermentans bemidjiense (strain ATCC BAA-1014 / DSM 16622 / JCM 12645 / Bem) (Geobacter bemidjiensis).